The primary structure comprises 248 residues: 3-deoxy-manno-octulosonate cytidylyltransferase (248 aa).

It belongs to the KdsB family.

Its subcellular location is the cytoplasm. It carries out the reaction 3-deoxy-alpha-D-manno-oct-2-ulosonate + CTP = CMP-3-deoxy-beta-D-manno-octulosonate + diphosphate. The protein operates within nucleotide-sugar biosynthesis; CMP-3-deoxy-D-manno-octulosonate biosynthesis; CMP-3-deoxy-D-manno-octulosonate from 3-deoxy-D-manno-octulosonate and CTP: step 1/1. Its pathway is bacterial outer membrane biogenesis; lipopolysaccharide biosynthesis. Activates KDO (a required 8-carbon sugar) for incorporation into bacterial lipopolysaccharide in Gram-negative bacteria. In Leptospira interrogans serogroup Icterohaemorrhagiae serovar copenhageni (strain Fiocruz L1-130), this protein is 3-deoxy-manno-octulosonate cytidylyltransferase.